A 956-amino-acid chain; its full sequence is Translation initiation factor IF-2 (956 aa).

The interval 50 to 351 (FPADSGGAAN…APSIGGVQVP (302 aa)) is disordered. Positions 64 to 95 (APKPARAPKPAPKAAPAPPVEEAPAEPAPPAA) are enriched in pro residues. Composition is skewed to low complexity over residues 96–107 (PEVVAAPEAPVA) and 121–136 (PEAP…ARPA). Positions 146-155 (AAEKPADTRT) are enriched in basic and acidic residues. Composition is skewed to gly residues over residues 171–192 (RPGG…GGPR) and 206–234 (RPGG…GQGG). Residues 235 to 254 (SRPSPGMMPGRSAVGRPGAP) are compositionally biased toward low complexity. Residues 255 to 320 (ARGGSGGPGG…GTQGAFGRAG (66 aa)) are compositionally biased toward gly residues. Positions 324–333 (VRARKSRRAK) are enriched in basic residues. Residues 448 to 619 (ARPPVVTVMG…AVLLTADAAL (172 aa)) form the tr-type G domain. Positions 457 to 464 (GHVDHGKT) are G1. 457–464 (GHVDHGKT) contributes to the GTP binding site. The segment at 482–486 (GITQH) is G2. The interval 507-510 (DTPG) is G3. GTP contacts are provided by residues 507–511 (DTPGH) and 561–564 (NKVD). The segment at 561-564 (NKVD) is G4. A G5 region spans residues 597–599 (SAK).

This sequence belongs to the TRAFAC class translation factor GTPase superfamily. Classic translation factor GTPase family. IF-2 subfamily.

Its subcellular location is the cytoplasm. One of the essential components for the initiation of protein synthesis. Protects formylmethionyl-tRNA from spontaneous hydrolysis and promotes its binding to the 30S ribosomal subunits. Also involved in the hydrolysis of GTP during the formation of the 70S ribosomal complex. The chain is Translation initiation factor IF-2 from Beutenbergia cavernae (strain ATCC BAA-8 / DSM 12333 / CCUG 43141 / JCM 11478 / NBRC 16432 / NCIMB 13614 / HKI 0122).